Consider the following 244-residue polypeptide: ATP synthase subunit 4, mitochondrial (244 aa).

The N-terminal 36 residues, 1-36 (MSSKLFCLRSFPSVQRTAWQRLVLPSTRKFSLTPTT), are a transit peptide targeting the mitochondrion.

Belongs to the eukaryotic ATPase B chain family. In terms of assembly, F-type ATPases have 2 components, CF(1) - the catalytic core - and CF(0) - the membrane proton channel. In yeast, the dimeric form of ATP synthase consists of 17 polypeptides: alpha, beta, gamma, delta, epsilon, 4 (B), 5 (OSCP), 6 (A), 8, 9 (C), d, E (Tim11), f, g, h, i/j and k.

The protein resides in the mitochondrion. It localises to the mitochondrion inner membrane. In terms of biological role, mitochondrial membrane ATP synthase (F(1)F(0) ATP synthase or Complex V) produces ATP from ADP in the presence of a proton gradient across the membrane which is generated by electron transport complexes of the respiratory chain. F-type ATPases consist of two structural domains, F(1) - containing the extramembraneous catalytic core, and F(0) - containing the membrane proton channel, linked together by a central stalk and a peripheral stalk. During catalysis, ATP synthesis in the catalytic domain of F(1) is coupled via a rotary mechanism of the central stalk subunits to proton translocation. Part of the complex F(0) domain and the peripheric stalk, which acts as a stator to hold the catalytic alpha(3)beta(3) subcomplex and subunit a/ATP6 static relative to the rotary elements. The chain is ATP synthase subunit 4, mitochondrial (atp4) from Schizosaccharomyces pombe (strain 972 / ATCC 24843) (Fission yeast).